Here is a 632-residue protein sequence, read N- to C-terminus: Phosphomethylpyrimidine synthase (632 aa).

The segment covering 1–13 (MNIRSNPDTTLPA) has biased composition (polar residues). The segment at 1–26 (MNIRSNPDTTLPAVTTGPLPSSRKIF) is disordered. Substrate contacts are provided by residues N221, M250, Y279, H315, 335-337 (SRG), 376-379 (DGLR), and E415. H419 is a binding site for Zn(2+). Residue Y442 coordinates substrate. H483 is a binding site for Zn(2+). Residues C563, C566, and C571 each coordinate [4Fe-4S] cluster.

It belongs to the ThiC family. As to quaternary structure, homodimer. It depends on [4Fe-4S] cluster as a cofactor.

It carries out the reaction 5-amino-1-(5-phospho-beta-D-ribosyl)imidazole + S-adenosyl-L-methionine = 4-amino-2-methyl-5-(phosphooxymethyl)pyrimidine + CO + 5'-deoxyadenosine + formate + L-methionine + 3 H(+). The protein operates within cofactor biosynthesis; thiamine diphosphate biosynthesis. In terms of biological role, catalyzes the synthesis of the hydroxymethylpyrimidine phosphate (HMP-P) moiety of thiamine from aminoimidazole ribotide (AIR) in a radical S-adenosyl-L-methionine (SAM)-dependent reaction. The polypeptide is Phosphomethylpyrimidine synthase (Afipia carboxidovorans (strain ATCC 49405 / DSM 1227 / KCTC 32145 / OM5) (Oligotropha carboxidovorans)).